Reading from the N-terminus, the 257-residue chain is Putative carboxymethylenebutenolidase (257 aa).

Active-site residues include Cys-148, Asp-195, and His-226.

Belongs to the dienelactone hydrolase family.

The enzyme catalyses 2-(5-oxo-2,5-dihydrofuran-2-ylidene)acetate + H2O = 4-oxohex-2-enedioate + H(+). In Saccharolobus solfataricus (strain ATCC 35092 / DSM 1617 / JCM 11322 / P2) (Sulfolobus solfataricus), this protein is Putative carboxymethylenebutenolidase.